A 223-amino-acid polypeptide reads, in one-letter code: Imidazoleglycerol-phosphate dehydratase (223 aa).

It belongs to the imidazoleglycerol-phosphate dehydratase family.

The catalysed reaction is D-erythro-1-(imidazol-4-yl)glycerol 3-phosphate = 3-(imidazol-4-yl)-2-oxopropyl phosphate + H2O. It participates in amino-acid biosynthesis; L-histidine biosynthesis; L-histidine from 5-phospho-alpha-D-ribose 1-diphosphate: step 6/9. This Torulaspora delbrueckii (Yeast) protein is Imidazoleglycerol-phosphate dehydratase (HIS3).